The chain runs to 381 residues: Dual-specificity RNA methyltransferase RlmN (381 aa).

Glu96 (proton acceptor) is an active-site residue. The Radical SAM core domain maps to 102 to 342 (TDDRGTLCVS…TRTTRGDDID (241 aa)). A disulfide bond links Cys109 and Cys345. 3 residues coordinate [4Fe-4S] cluster: Cys116, Cys120, and Cys123. S-adenosyl-L-methionine contacts are provided by residues 170-171 (GE), Ser202, 224-226 (SLH), and Asn302. Catalysis depends on Cys345, which acts as the S-methylcysteine intermediate.

It belongs to the radical SAM superfamily. RlmN family. [4Fe-4S] cluster serves as cofactor.

It localises to the cytoplasm. It carries out the reaction adenosine(2503) in 23S rRNA + 2 reduced [2Fe-2S]-[ferredoxin] + 2 S-adenosyl-L-methionine = 2-methyladenosine(2503) in 23S rRNA + 5'-deoxyadenosine + L-methionine + 2 oxidized [2Fe-2S]-[ferredoxin] + S-adenosyl-L-homocysteine. The enzyme catalyses adenosine(37) in tRNA + 2 reduced [2Fe-2S]-[ferredoxin] + 2 S-adenosyl-L-methionine = 2-methyladenosine(37) in tRNA + 5'-deoxyadenosine + L-methionine + 2 oxidized [2Fe-2S]-[ferredoxin] + S-adenosyl-L-homocysteine. Its function is as follows. Specifically methylates position 2 of adenine 2503 in 23S rRNA and position 2 of adenine 37 in tRNAs. m2A2503 modification seems to play a crucial role in the proofreading step occurring at the peptidyl transferase center and thus would serve to optimize ribosomal fidelity. The sequence is that of Dual-specificity RNA methyltransferase RlmN from Pseudomonas putida (strain ATCC 700007 / DSM 6899 / JCM 31910 / BCRC 17059 / LMG 24140 / F1).